The following is a 315-amino-acid chain: Aspartate carbamoyltransferase catalytic subunit (315 aa).

2 residues coordinate carbamoyl phosphate: Arg55 and Thr56. Lys83 lines the L-aspartate pocket. 3 residues coordinate carbamoyl phosphate: Arg105, His138, and Gln141. Residues Arg171 and Arg225 each coordinate L-aspartate. 2 residues coordinate carbamoyl phosphate: Gly266 and Pro267.

The protein belongs to the aspartate/ornithine carbamoyltransferase superfamily. ATCase family. As to quaternary structure, heterododecamer (2C3:3R2) of six catalytic PyrB chains organized as two trimers (C3), and six regulatory PyrI chains organized as three dimers (R2).

It carries out the reaction carbamoyl phosphate + L-aspartate = N-carbamoyl-L-aspartate + phosphate + H(+). It functions in the pathway pyrimidine metabolism; UMP biosynthesis via de novo pathway; (S)-dihydroorotate from bicarbonate: step 2/3. In terms of biological role, catalyzes the condensation of carbamoyl phosphate and aspartate to form carbamoyl aspartate and inorganic phosphate, the committed step in the de novo pyrimidine nucleotide biosynthesis pathway. The protein is Aspartate carbamoyltransferase catalytic subunit of Mycolicibacterium vanbaalenii (strain DSM 7251 / JCM 13017 / BCRC 16820 / KCTC 9966 / NRRL B-24157 / PYR-1) (Mycobacterium vanbaalenii).